A 279-amino-acid polypeptide reads, in one-letter code: Alcohol dehydrogenase-related 31 kDa protein (279 aa).

An NAD(+)-binding site is contributed by 11 to 34 (YVADCGGIALETSKVLMTKNIAKL). S139 is a binding site for substrate. Y152 serves as the catalytic Proton acceptor.

The protein belongs to the short-chain dehydrogenases/reductases (SDR) family.

The chain is Alcohol dehydrogenase-related 31 kDa protein (Adhr) from Drosophila subobscura (Fruit fly).